Reading from the N-terminus, the 264-residue chain is AA9 family lytic polysaccharide monooxygenase A (264 aa).

Positions 1–18 (MHFAALAILSSLVASAAA) are cleaved as a signal peptide. Histidine 19 is a binding site for Cu(2+). N-linked (GlcNAc...) asparagine glycans are attached at residues asparagine 51 and asparagine 75. The cysteines at positions 59 and 182 are disulfide-linked. Histidine 96 provides a ligand contact to Cu(2+). N-linked (GlcNAc...) asparagine glycosylation occurs at asparagine 110. An O2-binding site is contributed by histidine 162. Tyrosine 179 is a binding site for Cu(2+). 2 N-linked (GlcNAc...) asparagine glycosylation sites follow: asparagine 218 and asparagine 251.

The protein belongs to the polysaccharide monooxygenase AA9 family. Cu(2+) is required as a cofactor.

The protein localises to the secreted. It carries out the reaction [(1-&gt;4)-beta-D-glucosyl]n+m + reduced acceptor + O2 = 4-dehydro-beta-D-glucosyl-[(1-&gt;4)-beta-D-glucosyl]n-1 + [(1-&gt;4)-beta-D-glucosyl]m + acceptor + H2O.. Its function is as follows. Lytic polysaccharide monooxygenase (LPMO) that depolymerizes crystalline and amorphous polysaccharides via the oxidation of scissile alpha- or beta-(1-4)-glycosidic bonds, yielding C4 oxidation products. Catalysis by LPMOs requires the reduction of the active-site copper from Cu(II) to Cu(I) by a reducing agent and H(2)O(2) or O(2) as a cosubstrate. Active on cellulose and cello-oligosaccharides, as well as plant cell wall-derived hemicellulosic polysaccharides. Also active on cello-oligosaccharides such as cellohexaose, cellopentaose or cellotetraose. This Phanerochaete carnosa (strain HHB-10118-sp) (White-rot fungus) protein is AA9 family lytic polysaccharide monooxygenase A.